Reading from the N-terminus, the 214-residue chain is Adenylate kinase (214 aa).

Residue 10–15 (GAGKGT) coordinates ATP. Residues 30-59 (ATGDVLRAAVKEGTPLGLEAKAAMDRGDLV) form an NMP region. AMP-binding positions include threonine 31, arginine 36, 57–59 (DLV), and glutamine 92. The segment at 126–161 (GRTTCEACQRPFFGRQPGETCTEGGVSGTLVRRKDD) is LID. Arginine 127 is a binding site for ATP. 2 residues coordinate AMP: arginine 158 and arginine 169. Glycine 198 lines the ATP pocket.

The protein belongs to the adenylate kinase family. Monomer.

The protein resides in the cytoplasm. It carries out the reaction AMP + ATP = 2 ADP. It functions in the pathway purine metabolism; AMP biosynthesis via salvage pathway; AMP from ADP: step 1/1. Catalyzes the reversible transfer of the terminal phosphate group between ATP and AMP. Plays an important role in cellular energy homeostasis and in adenine nucleotide metabolism. This Gemmatimonas aurantiaca (strain DSM 14586 / JCM 11422 / NBRC 100505 / T-27) protein is Adenylate kinase.